A 432-amino-acid chain; its full sequence is Enolase (432 aa).

Q167 serves as a coordination point for (2R)-2-phosphoglycerate. E209 (proton donor) is an active-site residue. D246, E290, and D317 together coordinate Mg(2+). (2R)-2-phosphoglycerate-binding residues include K342, R371, S372, and K393. K342 (proton acceptor) is an active-site residue.

It belongs to the enolase family. In terms of assembly, component of the RNA degradosome, a multiprotein complex involved in RNA processing and mRNA degradation. Mg(2+) is required as a cofactor.

The protein resides in the cytoplasm. It localises to the secreted. It is found in the cell surface. It carries out the reaction (2R)-2-phosphoglycerate = phosphoenolpyruvate + H2O. The protein operates within carbohydrate degradation; glycolysis; pyruvate from D-glyceraldehyde 3-phosphate: step 4/5. Its function is as follows. Catalyzes the reversible conversion of 2-phosphoglycerate (2-PG) into phosphoenolpyruvate (PEP). It is essential for the degradation of carbohydrates via glycolysis. The protein is Enolase of Cronobacter sakazakii (strain ATCC BAA-894) (Enterobacter sakazakii).